The primary structure comprises 156 residues: SsrA-binding protein (156 aa).

Belongs to the SmpB family.

The protein localises to the cytoplasm. In terms of biological role, required for rescue of stalled ribosomes mediated by trans-translation. Binds to transfer-messenger RNA (tmRNA), required for stable association of tmRNA with ribosomes. tmRNA and SmpB together mimic tRNA shape, replacing the anticodon stem-loop with SmpB. tmRNA is encoded by the ssrA gene; the 2 termini fold to resemble tRNA(Ala) and it encodes a 'tag peptide', a short internal open reading frame. During trans-translation Ala-aminoacylated tmRNA acts like a tRNA, entering the A-site of stalled ribosomes, displacing the stalled mRNA. The ribosome then switches to translate the ORF on the tmRNA; the nascent peptide is terminated with the 'tag peptide' encoded by the tmRNA and targeted for degradation. The ribosome is freed to recommence translation, which seems to be the essential function of trans-translation. This is SsrA-binding protein from Clostridium tetani (strain Massachusetts / E88).